The primary structure comprises 188 residues: Peptide deformylase (188 aa).

2 residues coordinate Fe cation: Cys109 and His152. The active site involves Glu153. His156 is a Fe cation binding site.

It belongs to the polypeptide deformylase family. Fe(2+) is required as a cofactor.

It catalyses the reaction N-terminal N-formyl-L-methionyl-[peptide] + H2O = N-terminal L-methionyl-[peptide] + formate. Removes the formyl group from the N-terminal Met of newly synthesized proteins. Requires at least a dipeptide for an efficient rate of reaction. N-terminal L-methionine is a prerequisite for activity but the enzyme has broad specificity at other positions. This chain is Peptide deformylase, found in Chloroflexus aggregans (strain MD-66 / DSM 9485).